Consider the following 461-residue polypeptide: Nuclear distribution protein PAC1 (461 aa).

The 33-residue stretch at 9 to 41 folds into the LisH domain; it reads QAEELHKSIIAYLTANNLLDTANTLRAELNLNE. Positions 61 to 88 form a coiled coil; that stretch reads TSVVRLQKKIMDLESRMSAMQAELDNAT. WD repeat units lie at residues 114 to 155, 157 to 197, 201 to 248, 251 to 290, 312 to 355, 357 to 396, 401 to 446, and 448 to 461; these read SHRD…RTIK, HTRA…KNIR, GHDH…CLRT, GHTA…PETK, QYLS…LLTL, GHDN…KCIK, AHER…IRCV, and ATGG…IFAN.

This sequence belongs to the WD repeat LIS1/nudF family. As to quaternary structure, self-associates. Interacts with NDL1 and dynein.

The protein localises to the cytoplasm. It localises to the cytoskeleton. Its subcellular location is the spindle pole. Positively regulates the activity of the minus-end directed microtubule motor protein dynein. May enhance dynein-mediated microtubule sliding by targeting dynein to the microtubule plus end. Required for nuclear migration during vegetative growth as well as development. Required for retrograde early endosome (EE) transport from the hyphal tip. Required for localization of dynein to the mitotic spindle poles. Recruits additional proteins to the dynein complex at SPBs. In Arthroderma benhamiae (strain ATCC MYA-4681 / CBS 112371) (Trichophyton mentagrophytes), this protein is Nuclear distribution protein PAC1.